We begin with the raw amino-acid sequence, 200 residues long: Vacuolar iron transporter homolog 1 (200 aa).

The Cytoplasmic portion of the chain corresponds to 1 to 34 (MESHNVSNSLNLDMEMDQEKAFDYSKRAQWLRAA). Residues 35-55 (VLGANDGLVSTASLMMGVGAV) traverse the membrane as a helical segment. At 56–62 (KQDVKVM) the chain is on the vacuolar side. Residues 63 to 83 (ILSGFAGLVAGACSMAIGEFV) form a helical membrane-spanning segment. The Cytoplasmic portion of the chain corresponds to 84–116 (SVYSQYDIEVAQMKRENGGQVEKEKLPSPMQAA). Residues 117–137 (AASALAFSLGAIVPLMAAAFV) form a helical membrane-spanning segment. Topologically, residues 138–143 (KDYHVR) are vacuolar. A helical membrane pass occupies residues 144-164 (IGAIVAAVTLALVMFGWLGAV). Residues 165 to 176 (LGKAPVFKSSAR) are Cytoplasmic-facing. The helical transmembrane segment at 177 to 197 (VLIGGWLAMAVTFGLTKLIGT) threads the bilayer. Residues 198 to 200 (HSL) lie on the Vacuolar side of the membrane.

The protein belongs to the CCC1 family. In terms of tissue distribution, expressed in the vascular bundles of the shoot and the stele of the root. Expressed in inflorescences and at lower levels in leaves.

The protein resides in the vacuole membrane. The enzyme catalyses Fe(2+)(in) = Fe(2+)(out). Vacuolar iron transporter involved in the transfer of iron ions from the cytosol to the vacuole for intracellular iron storage. Involved in regulation of cellular iron homeostasis. Vacuolar iron storage is required for seed embryo and seedling development. This is Vacuolar iron transporter homolog 1 from Arabidopsis thaliana (Mouse-ear cress).